The chain runs to 192 residues: Cytochrome b-245 light chain (192 aa).

At 2–7 the chain is on the cytoplasmic side; the sequence is GQIEWA. A helical membrane pass occupies residues 8–30; it reads MWANEQALASGLILITGGIVATA. At 31–35 the chain is on the extracellular side; sequence GRFTQ. The chain crosses the membrane as a helical span at residues 36 to 53; sequence WYFGAYSIVAGVLICLLE. Topologically, residues 54 to 69 are cytoplasmic; it reads YPRGKRKKGSTMERCG. The stretch at 70–80 is an intramembrane region; sequence QKYLTAVVKLF. Topologically, residues 81-86 are cytoplasmic; that stretch reads GPLTRN. The helical transmembrane segment at 87 to 104 threads the bilayer; it reads YYVRAVLHLLLSVPAGFL. Residue leucine 105 is a topological domain, extracellular. The chain crosses the membrane as a helical span at residues 106 to 126; that stretch reads ATILGTVCLAIASVIYLLAAI. The Cytoplasmic portion of the chain corresponds to 127–192; the sequence is RGEQWTPIEP…NPIPVTDEVV (66 aa). Positions 134–192 are disordered; the sequence is IEPKPKERPQVGGTIKQPPTNPPPRPPAEVRKKPSEAEEEAASAGGPQVNPIPVTDEVV. Phosphothreonine is present on threonine 147. Lysine 149 participates in a covalent cross-link: Glycyl lysine isopeptide (Lys-Gly) (interchain with G-Cter in ubiquitin). Phosphoserine is present on residues serine 168 and serine 176.

The protein belongs to the p22phox family. In terms of assembly, component of the phagocyte NADPH oxidase core complex/cytochrome b558 complex, composed of CYBB (heavy chain (beta)) and CYBA (light chain (alpha)). Component of the phagocyte NADPH oxidase complex composed of an obligatory core heterodimer formed by the membrane proteins CYBA and CYBB and the cytosolic regulatory subunits NCF1/p47-phox, NCF2/p67-phox, NCF4/p40-phox and the small GTPase RAC1 or RAC2. Interacts with NCF1 (via SH3 domain). Interacts with SH3PXD2A. Interacts with DUOX1, DUOX2 and TPO. Interacts with NOX4; this interaction mediates superoxide generation. Interacts with calprotectin (S100A8/9). Interacts with GBP7. Interacts with NOXO1. Forms a heterodimer with NOX3 and is essential for activity and cell membrane localization of NOX3. Interacts with NOX1. Post-translationally, phosphorylation at Thr-147 enhances NADPH oxidase activity by promoting NCF1/p47-phox binding. In terms of processing, ubiquitinated at Lys-149 likely by RNF145. As to expression, expressed to a relatively high level in kidney, spleen, thymus and lung, and to a lower level in aorta, adrenals, and heart. Expression is not detected in liver or brain.

It is found in the cell membrane. Functionally, subunit of NADPH oxidase complexes that is required for the NADPH oxidase activity that generates, in various cell types, superoxide from molecular oxygen utilizing NADPH as an electron donor. Subunit of the phagocyte NADPH oxidase complex that mediates the transfer of electrons from cytosolic NADPH to O2 to produce the superoxide anion (O2(-)). In the activated complex, electrons are first transferred from NADPH to flavin adenine dinucleotide (FAD) and subsequently transferred via two heme molecules to molecular oxygen, producing superoxide through an outer-sphere reaction. Activation of the NADPH oxidase complex is initiated by the assembly of cytosolic subunits of the NADPH oxidase complex with the core NADPH oxidase complex to form a complex at the plasma membrane or phagosomal membrane. This activation process is initiated by phosphorylation dependent binding of the cytosolic NCF1/p47-phox subunit to the C-terminus of CYBA/p22-phox. Aassociates with NOX3 to form a functional NADPH oxidase constitutively generating superoxide. The sequence is that of Cytochrome b-245 light chain from Rattus norvegicus (Rat).